The following is a 585-amino-acid chain: Probable glucomannan 4-beta-mannosyltransferase 7 (585 aa).

Residues 87–107 (VIAPTLQVAVWVCMVMSVMLV) form a helical membrane-spanning segment. The active site involves D188. The substrate site is built by D247 and D249. D341 is an active-site residue. Helical transmembrane passes span 420–440 (VVAP…SVMI), 443–463 (LFIP…ITTI), 534–554 (LPEI…LIFH), and 563–583 (LYLQ…NFAC).

The protein belongs to the glycosyltransferase 2 family. Plant cellulose synthase-like A subfamily.

The protein resides in the golgi apparatus membrane. The catalysed reaction is GDP-mannose + (glucomannan)n = GDP + (glucomannan)n+1.. Probable mannan synthase which consists of a 4-beta-mannosyltransferase activity on mannan using GDP-mannose. The beta-1,4-mannan product is the backbone for galactomannan synthesis by galactomannan galactosyltransferase. Galactomannan is a noncellulosic polysaccharides of plant cell wall. The polypeptide is Probable glucomannan 4-beta-mannosyltransferase 7 (Oryza sativa subsp. japonica (Rice)).